The following is a 448-amino-acid chain: Probable glycine dehydrogenase (decarboxylating) subunit 1 (448 aa).

It belongs to the GcvP family. N-terminal subunit subfamily. The glycine cleavage system is composed of four proteins: P, T, L and H. In this organism, the P 'protein' is a heterodimer of two subunits.

It catalyses the reaction N(6)-[(R)-lipoyl]-L-lysyl-[glycine-cleavage complex H protein] + glycine + H(+) = N(6)-[(R)-S(8)-aminomethyldihydrolipoyl]-L-lysyl-[glycine-cleavage complex H protein] + CO2. In terms of biological role, the glycine cleavage system catalyzes the degradation of glycine. The P protein binds the alpha-amino group of glycine through its pyridoxal phosphate cofactor; CO(2) is released and the remaining methylamine moiety is then transferred to the lipoamide cofactor of the H protein. The polypeptide is Probable glycine dehydrogenase (decarboxylating) subunit 1 (Listeria monocytogenes serotype 4b (strain F2365)).